A 360-amino-acid chain; its full sequence is Phospho-N-acetylmuramoyl-pentapeptide-transferase (360 aa).

10 helical membrane passes run Y21–G41, T73–L93, T94–V114, W132–G152, V168–S188, G199–T219, L239–Y259, V263–L283, F288–V308, and V338–K358.

Belongs to the glycosyltransferase 4 family. MraY subfamily. Mg(2+) is required as a cofactor.

It localises to the cell inner membrane. It catalyses the reaction UDP-N-acetyl-alpha-D-muramoyl-L-alanyl-gamma-D-glutamyl-meso-2,6-diaminopimeloyl-D-alanyl-D-alanine + di-trans,octa-cis-undecaprenyl phosphate = di-trans,octa-cis-undecaprenyl diphospho-N-acetyl-alpha-D-muramoyl-L-alanyl-D-glutamyl-meso-2,6-diaminopimeloyl-D-alanyl-D-alanine + UMP. It participates in cell wall biogenesis; peptidoglycan biosynthesis. Functionally, catalyzes the initial step of the lipid cycle reactions in the biosynthesis of the cell wall peptidoglycan: transfers peptidoglycan precursor phospho-MurNAc-pentapeptide from UDP-MurNAc-pentapeptide onto the lipid carrier undecaprenyl phosphate, yielding undecaprenyl-pyrophosphoryl-MurNAc-pentapeptide, known as lipid I. The polypeptide is Phospho-N-acetylmuramoyl-pentapeptide-transferase (Vibrio cholerae serotype O1 (strain ATCC 39541 / Classical Ogawa 395 / O395)).